Reading from the N-terminus, the 58-residue chain is Large ribosomal subunit protein bL32 (58 aa).

This sequence belongs to the bacterial ribosomal protein bL32 family.

This is Large ribosomal subunit protein bL32 from Caldicellulosiruptor bescii (strain ATCC BAA-1888 / DSM 6725 / KCTC 15123 / Z-1320) (Anaerocellum thermophilum).